The chain runs to 214 residues: MPATALSLPLDEIRYDERGLVPAIVQDYLDGTVLMLAWMNRESLQKTLETGRTWFWSRSRQELWPKGETSGHVQWVKSIRYDCDSDALLLTVEQVGHIACHTGERSCFHRHGAKGESIEPPPADTLSQVYNIVCQRRDFPQLQSYTSSLFTAGDNKILKKLGEETAEVVMACKDDDPEAIASEVADLFYHTLVALAYHRVSLRQVYEQLQLRRR.

A phosphoribosyl-AMP cyclohydrolase region spans residues 1 to 125; it reads MPATALSLPL…ESIEPPPADT (125 aa). The tract at residues 126–214 is phosphoribosyl-ATP pyrophosphohydrolase; the sequence is LSQVYNIVCQ…VYEQLQLRRR (89 aa).

The protein in the N-terminal section; belongs to the PRA-CH family. It in the C-terminal section; belongs to the PRA-PH family.

The protein localises to the cytoplasm. It carries out the reaction 1-(5-phospho-beta-D-ribosyl)-ATP + H2O = 1-(5-phospho-beta-D-ribosyl)-5'-AMP + diphosphate + H(+). It catalyses the reaction 1-(5-phospho-beta-D-ribosyl)-5'-AMP + H2O = 1-(5-phospho-beta-D-ribosyl)-5-[(5-phospho-beta-D-ribosylamino)methylideneamino]imidazole-4-carboxamide. It participates in amino-acid biosynthesis; L-histidine biosynthesis; L-histidine from 5-phospho-alpha-D-ribose 1-diphosphate: step 2/9. Its pathway is amino-acid biosynthesis; L-histidine biosynthesis; L-histidine from 5-phospho-alpha-D-ribose 1-diphosphate: step 3/9. The chain is Histidine biosynthesis bifunctional protein HisIE from Thermosynechococcus vestitus (strain NIES-2133 / IAM M-273 / BP-1).